The primary structure comprises 264 residues: Thymidylate synthase (264 aa).

Position 21 (arginine 21) interacts with dUMP. Histidine 51 contacts (6R)-5,10-methylene-5,6,7,8-tetrahydrofolate. Residue 126–127 (RR) participates in dUMP binding. The Nucleophile role is filled by cysteine 146. Residues 166 to 169 (RSCD), asparagine 177, and 207 to 209 (HLY) contribute to the dUMP site. Aspartate 169 serves as a coordination point for (6R)-5,10-methylene-5,6,7,8-tetrahydrofolate. Alanine 263 lines the (6R)-5,10-methylene-5,6,7,8-tetrahydrofolate pocket.

Belongs to the thymidylate synthase family. Bacterial-type ThyA subfamily. Homodimer.

The protein localises to the cytoplasm. It carries out the reaction dUMP + (6R)-5,10-methylene-5,6,7,8-tetrahydrofolate = 7,8-dihydrofolate + dTMP. Its pathway is pyrimidine metabolism; dTTP biosynthesis. Functionally, catalyzes the reductive methylation of 2'-deoxyuridine-5'-monophosphate (dUMP) to 2'-deoxythymidine-5'-monophosphate (dTMP) while utilizing 5,10-methylenetetrahydrofolate (mTHF) as the methyl donor and reductant in the reaction, yielding dihydrofolate (DHF) as a by-product. This enzymatic reaction provides an intracellular de novo source of dTMP, an essential precursor for DNA biosynthesis. This is Thymidylate synthase from Yersinia pseudotuberculosis serotype O:1b (strain IP 31758).